Here is a 100-residue protein sequence, read N- to C-terminus: NAD(P)H-quinone oxidoreductase subunit 4L, chloroplastic (100 aa).

Helical transmembrane passes span 2–22, 28–48, and 61–81; these read ILQH…FGLI, VKIL…LVIF, and LFGL…LAIL.

This sequence belongs to the complex I subunit 4L family. In terms of assembly, NDH is composed of at least 16 different subunits, 5 of which are encoded in the nucleus.

The protein localises to the plastid. The protein resides in the chloroplast thylakoid membrane. It catalyses the reaction a plastoquinone + NADH + (n+1) H(+)(in) = a plastoquinol + NAD(+) + n H(+)(out). It carries out the reaction a plastoquinone + NADPH + (n+1) H(+)(in) = a plastoquinol + NADP(+) + n H(+)(out). NDH shuttles electrons from NAD(P)H:plastoquinone, via FMN and iron-sulfur (Fe-S) centers, to quinones in the photosynthetic chain and possibly in a chloroplast respiratory chain. The immediate electron acceptor for the enzyme in this species is believed to be plastoquinone. Couples the redox reaction to proton translocation, and thus conserves the redox energy in a proton gradient. The sequence is that of NAD(P)H-quinone oxidoreductase subunit 4L, chloroplastic from Chara vulgaris (Common stonewort).